The sequence spans 378 residues: Lysocardiolipin acyltransferase 1 (378 aa).

2 helical membrane passes run Phe9–Leu29 and Ile46–Val66. The HXXXXD motif motif lies at His85–Asp90. Helical transmembrane passes span Leu302–Thr322 and Phe336–Leu358.

It belongs to the 1-acyl-sn-glycerol-3-phosphate acyltransferase family.

Its subcellular location is the endoplasmic reticulum membrane. The enzyme catalyses a 1-acyl-sn-glycero-3-phosphate + an acyl-CoA = a 1,2-diacyl-sn-glycero-3-phosphate + CoA. It catalyses the reaction a 1-acyl-sn-glycero-3-phospho-(1D-myo-inositol) + an acyl-CoA = a 1,2-diacyl-sn-glycero-3-phospho-(1D-myo-inositol) + CoA. The catalysed reaction is 1-acyl-sn-glycero-3-phospho-(1'-sn-glycerol) + an acyl-CoA = a 1,2-diacyl-sn-glycero-3-phospho-(1'-sn-glycerol) + CoA. It carries out the reaction 1-hexadecanoyl-sn-glycero-3-phosphate + (9Z)-octadecenoyl-CoA = 1-hexadecanoyl-2-(9Z-octadecenoyl)-sn-glycero-3-phosphate + CoA. The enzyme catalyses 1-(9Z-octadecenoyl)-sn-glycero-3-phosphate + (9Z)-octadecenoyl-CoA = 1,2-di-(9Z-octadecenoyl)-sn-glycero-3-phosphate + CoA. It catalyses the reaction 1-(9Z,12Z)-octadecadienoyl-sn-glycero-3-phosphate + (9Z)-octadecenoyl-CoA = 1-(9Z,12Z)-octadecadienoyl-2-(9Z)-octadecenoyl-sn-glycero-3-phosphate + CoA. The catalysed reaction is 1-(9Z,12Z,15Z)-octadecatrienoyl-sn-glycero-3-phosphate + (9Z)-octadecenoyl-CoA = 1-(9Z,12Z,15Z)-octadecatrienoyl-2-(9Z)-octadecenoyl-sn-glycero-3-phosphate + CoA. It carries out the reaction 1-(9Z-octadecenoyl)-sn-glycero-3-phosphate + hexadecanoyl-CoA = 1-(9Z)-octadecenoyl-2-hexadecanoyl-sn-glycero-3-phosphate + CoA. The enzyme catalyses 1-(9Z-octadecenoyl)-sn-glycero-3-phosphate + octadecanoyl-CoA = 1-(9Z-octadecenoyl)-2-octadecanoyl-sn-glycero-3-phosphate + CoA. It catalyses the reaction 1-acyl-sn-glycero-3-phospho-(1'-sn-glycerol) + (9Z)-octadecenoyl-CoA = 1-acyl-2-(9Z-octadecenoyl)-sn-glycero-3-phospho-(1'-sn-glycerol) + CoA. The catalysed reaction is a 1-acyl-sn-glycero-3-phospho-(1D-myo-inositol) + (9Z)-octadecenoyl-CoA = a 1-acyl-2-(9Z-octadecenoyl)-sn-glycero-3-phospho-(1D-myo-inositol) + CoA. It carries out the reaction 1-hexadecanoyl-sn-glycero-3-phospho-(1D-myo-inositol) + hexadecanoyl-CoA = 1,2-dihexadecanoyl-sn-glycero-3-phospho-(1D-myo-inositol) + CoA. The enzyme catalyses 1-hexadecanoyl-sn-glycero-3-phospho-(1D-myo-inositol) + octadecanoyl-CoA = 1-hexadecanoyl-2-octadecanoyl-sn-glycero-3-phospho-(1D-myo-inositol) + CoA. It catalyses the reaction 1-hexadecanoyl-sn-glycero-3-phospho-(1D-myo-inositol) + (9Z)-octadecenoyl-CoA = 1-hexadecanoyl-2-(9Z-octadecenoyl)-sn-glycero-3-phospho-(1D-myo-inositol) + CoA. The catalysed reaction is 1-hexadecanoyl-sn-glycero-3-phospho-(1D-myo-inositol) + (9Z,12Z)-octadecadienoyl-CoA = 1-hexadecanoyl-2-(9Z,12Z-octadecadienoyl)-sn-glycero-3-phospho-(1D-myo-inositol) + CoA. It carries out the reaction 1-hexadecanoyl-sn-glycero-3-phospho-(1D-myo-inositol) + (5Z,8Z,11Z,14Z)-eicosatetraenoyl-CoA = 1-hexadecanoyl-2-(5Z,8Z,11Z,14Z-eicosatetraenoyl)-sn-glycero-3-phospho-D-myo-inositol + CoA. The enzyme catalyses 1-hexadecanoyl-sn-glycero-3-phospho-(1'-sn-glycerol) + hexadecanoyl-CoA = 1,2-dihexadecanoyl-sn-glycero-3-phospho-(1'-sn-glycerol) + CoA. It catalyses the reaction 1-hexadecanoyl-sn-glycero-3-phospho-(1'-sn-glycerol) + octadecanoyl-CoA = 1-hexadecanoyl-2-octadecanoyl-sn-glycero-3-phospho-(1'-sn-glycerol) + CoA. The catalysed reaction is 1-hexadecanoyl-sn-glycero-3-phospho-(1'-sn-glycerol) + (9Z)-octadecenoyl-CoA = 1-hexadecanoyl-2-(9Z-octadecenoyl)-sn-glycero-3-phospho-(1'-sn-glycerol) + CoA. It carries out the reaction 1-hexadecanoyl-sn-glycero-3-phospho-(1'-sn-glycerol) + (9Z,12Z)-octadecadienoyl-CoA = 1-hexadecanoyl-2-(9Z,12Z-octadecadienoyl)-sn-glycero-3-phospho-(1'-sn-glycerol) + CoA. The enzyme catalyses 1-tetradecanoyl-sn-glycero-3-phospho-(1'-sn-glycerol) + (9Z)-octadecenoyl-CoA = 1-tetradecanoyl-2-(9Z-octadecenoyl)-sn-glycero-3-phospho-(1'-sn-glycerol) + CoA. It catalyses the reaction 1-octadecanoyl-sn-glycero-3-phospho-(1'-sn-glycerol) + (9Z)-octadecenoyl-CoA = 1-octadecanoyl-2-(9Z-octadecenoyl)-sn-glycero-3-phospho-(1'-sn-glycerol) + CoA. The catalysed reaction is 1-(9Z-octadecenoyl)-sn-glycero-3-phospho-(1'-sn-glycerol) + (9Z)-octadecenoyl-CoA = 1,2-di-(9Z-octadecenoyl)-sn-glycero-3-phospho-(1'-sn-glycerol) + CoA. It carries out the reaction 1-hexadecanoyl-sn-glycero-3-phospho-(1D-myo-inositol) + dodecanoyl-CoA = 1-hexadecanoyl-2-dodecanoyl-sn-glycero-3-phospho-(1D-myo-inositol) + CoA. The enzyme catalyses 1',3'-bis-[1-acyl-sn-glycero-3-phospho]-glycerol + (9Z)-octadecenoyl-CoA = 1'-[1-acyl-2-(9Z)-octadecenoyl-sn-glycero-3-phospho],3'-[1-acyl,2-hydroxy-sn-glycero-3-phospho]-glycerol + CoA. It catalyses the reaction 1'-[1,2-diacyl-sn-glycero-3-phospho],3'-[1-acyl-sn-glycero-3-phospho]-glycerol + (9Z)-octadecenoyl-CoA = 1'-[1,2-diacyl-sn-glycero-3-phospho],3'-[1-acyl,2-(9Z)-octadecenoyl-sn-glycero-3-phospho]-glycerol + CoA. The catalysed reaction is 1'-[1,2-diacyl-sn-glycero-3-phospho],3'-[1-acyl-sn-glycero-3-phospho]-glycerol + (9Z,12Z)-octadecadienoyl-CoA = 1'-[1,2-diacyl-sn-glycero-3-phospho],3'-[1-acyl,2-(9Z,12Z)-octadecadienoyl-sn-glycero-3-phospho]-glycerol + CoA. It carries out the reaction 1'-[1,2-diacyl-sn-glycero-3-phospho],3'-[1-acyl-sn-glycero-3-phospho]-glycerol + dodecanoyl-CoA = 1'-[1,2-diacyl-sn-glycero-3-phospho],3'-[1-acyl,2-dodecanoyl-sn-glycero-3-phospho]-glycerol + CoA. The enzyme catalyses 1',3'-bis-[1-acyl-sn-glycero-3-phospho]-glycerol + dodecanoyl-CoA = 1'-[1-acyl-2-dodecanoyl-sn-glycero-3-phospho],3'-[1-acyl,2-hydroxy-sn-glycero-3-phospho]-glycerol + CoA. It catalyses the reaction a 1-acyl-sn-glycero-3-phosphate + (9Z)-octadecenoyl-CoA = a 1-acyl-2-(9Z-octadecenoyl)-sn-glycero-3-phosphate + CoA. The catalysed reaction is 1',3'-bis-[1-acyl-sn-glycero-3-phospho]-glycerol + (9Z,12Z)-octadecadienoyl-CoA = 1'-[1-acyl-2-(9Z,12Z)-octadecadienoyl-sn-glycero-3-phospho],3'-[1-acyl,2-hydroxy-sn-glycero-3-phospho]-glycerol + CoA. It carries out the reaction 1',3'-bis-[1-acyl-sn-glycero-3-phospho]-glycerol + hexadecanoyl-CoA = 1'-[1-acyl-2-hexadecanoyl-sn-glycero-3-phospho],3'-[1-acyl,2-hydroxy-sn-glycero-3-phospho]-glycerol + CoA. The enzyme catalyses 1',3'-bis-[1-acyl-sn-glycero-3-phospho]-glycerol + octadecanoyl-CoA = 1'-[1-acyl-2-octadecanoyl-sn-glycero-3-phospho],3'-[1-acyl,2-hydroxy-sn-glycero-3-phospho]-glycerol + CoA. It catalyses the reaction 1'-[1,2-diacyl-sn-glycero-3-phospho],3'-[1-acyl-sn-glycero-3-phospho]-glycerol + octanoyl-CoA = 1'-[1,2-diacyl-sn-glycero-3-phospho],3'-[1-acyl,2-octanoyl-sn-glycero-3-phospho]-glycerol + CoA. The catalysed reaction is 1',3'-bis-[1-acyl-sn-glycero-3-phospho]-glycerol + octanoyl-CoA = 1'-[1-acyl-2-octanoyl-sn-glycero-3-phospho],3'-[1-acyl,2-hydroxy-sn-glycero-3-phospho]-glycerol + CoA. It carries out the reaction 1'-[1,2-diacyl-sn-glycero-3-phospho],3'-[1-acyl-sn-glycero-3-phospho]-glycerol + hexadecanoyl-CoA = 1'-[1,2-diacyl-sn-glycero-3-phospho],3'-[1-acyl,2-hexadecanoyl-sn-glycero-3-phospho]-glycerol + CoA. The enzyme catalyses 1'-[1,2-diacyl-sn-glycero-3-phospho],3'-[1-acyl-sn-glycero-3-phospho]-glycerol + (5Z,8Z,11Z,14Z)-eicosatetraenoyl-CoA = 1'-[1,2-diacyl-sn-glycero-3-phospho],3'-[1-acyl,2-(5Z,8Z,11Z,14Z)-eicosatetraenoyl-sn-glycero-3-phospho]-glycerol + CoA. It catalyses the reaction 1',3'-bis-[1-acyl-sn-glycero-3-phospho]-glycerol + (5Z,8Z,11Z,14Z)-eicosatetraenoyl-CoA = 1'-[1-acyl-2-(5Z,8Z,11Z,14Z)-eicosatetraenoyl-sn-glycero-3-phospho],3'-[1-acyl,2-hydroxy-sn-glycero-3-phospho]-glycerol + CoA. The catalysed reaction is a 1-acyl-sn-glycero-3-phospho-(1D-myo-inositol) + octadecanoyl-CoA = a 1-acyl-2-octadecanoyl-sn-glycero-3-phospho-(1D-myo-inositol) + CoA. It carries out the reaction a 2-acyl-sn-glycero-3-phospho-D-myo-inositol + octadecanoyl-CoA = 1-octadecanoyl-2-acyl-sn-glycero-3-phospho-1D-myo-inositol + CoA. It participates in phospholipid metabolism; CDP-diacylglycerol biosynthesis; CDP-diacylglycerol from sn-glycerol 3-phosphate: step 2/3. Exhibits acyl-CoA:lysocardiolipin acyltransferase (ALCAT) activity; catalyzes the reacylation of lyso-cardiolipin to cardiolipin (CL), a key step in CL remodeling. Recognizes both monolysocardiolipin and dilysocardiolipin as substrates with a preference for linoleoyl-CoA and oleoyl-CoA as acyl donors. Also exhibits 1-acyl-sn-glycerol-3-phosphate acyltransferase activity (AGPAT) activity; converts 1-acyl-sn-glycerol-3- phosphate (lysophosphatidic acid or LPA) into 1,2-diacyl-sn-glycerol-3- phosphate (phosphatidic acid or PA) by incorporating an acyl moiety at the sn-2 position of the glycerol backbone. Possesses both lysophosphatidylinositol acyltransferase (LPIAT) and lysophosphatidylglycerol acyltransferase (LPGAT) activities. Required for establishment of the hematopoietic and endothelial lineages. The protein is Lysocardiolipin acyltransferase 1 (LCLAT1) of Gallus gallus (Chicken).